Here is a 315-residue protein sequence, read N- to C-terminus: WD repeat domain-containing protein 83 (315 aa).

7 WD repeats span residues C23–T62, G65–K104, G107–V146, E151–D188, V190–E228, G231–A272, and V275–G313.

The protein belongs to the WD repeat MORG1 family. In terms of assembly, interacts with EGLN3/PHD3. Interacts with ERK signaling proteins MAP2K1/MEK1, MAP2K2/MEK2, LAMTOR3, ARAF/Raf-1, MAPK1/ERK2 and MAPK3/ERK1. Identified in the spliceosome C complex. Interacts with PARD6B and CRB3. Interacts strongly with GTP-bound RRAGA but not with inactive GDP-bound. Interacts with p62/SQSTM1.

It localises to the cytoplasm. It is found in the lysosome. The protein resides in the nucleus. Its function is as follows. Molecular scaffold protein for various multimeric protein complexes. Acts as a module in the assembly of a multicomponent scaffold for the ERK pathway, linking ERK responses to specific agonists. At low concentrations it enhances ERK activation, whereas high concentrations lead to the inhibition of ERK activation. Also involved in response to hypoxia by acting as a negative regulator of HIF1A/HIF-1-alpha via its interaction with EGLN3/PHD3. May promote degradation of HIF1A. May act by recruiting signaling complexes to a specific upstream activator. May also be involved in pre-mRNA splicing. Participates in tight junction development by regulating apico-basal polarity, a key step in tissue development and organization. Mechanistically, regulates the translocation of PAR6-aPKC from the cytoplasm to the apical surface by acting as an adapter between PARD6B AND CRB3. Also acts as a negative regulator of mTORC1 under nutrient-rich conditions by binding to the active Rag GTPases to inhibit mTORC1 localization to the lysosome and phosphorylation of downstream targets. This facilitates constitutive basal autophagy during nutrient availability. The protein is WD repeat domain-containing protein 83 (WDR83) of Homo sapiens (Human).